The sequence spans 420 residues: Fasciclin-like arabinogalactan protein 8 (420 aa).

An N-terminal signal peptide occupies residues 1–25 (MAASQTFSLLAFTFSLLAFASTVSS). FAS1 domains follow at residues 26–172 (HNIT…DAPI) and 186–326 (SLSN…DNVL). Residues Asn-27, Asn-128, Asn-162, Asn-189, and Asn-273 are each glycosylated (N-linked (GlcNAc...) asparagine). Residues 335-394 (SKSPSPAPAPEPVTAPTPSPADAPSPTAASPPAPPTDESPESAPSDSPTGSANSKSANAA) form a disordered region. The segment covering 339–371 (SPAPAPEPVTAPTPSPADAPSPTAASPPAPPTD) has biased composition (pro residues). Asn-392 carries GPI-anchor amidated asparagine lipidation. The propeptide at 393–420 (AAVGVSTPSLFTALVTIAAIAVSVSLCS) is removed in mature form.

The protein belongs to the fasciclin-like AGP family. In terms of tissue distribution, expressed mainly in flowers and to a lesser extent in leaves and roots.

The protein localises to the cell membrane. May be a cell surface adhesion protein. In Arabidopsis thaliana (Mouse-ear cress), this protein is Fasciclin-like arabinogalactan protein 8 (FLA8).